A 357-amino-acid polypeptide reads, in one-letter code: MEYKRFKTRQIKVGNVSIGGDAPISVQSMLFTKTRDIEGSLEQISRLYFAGANIVRLACLDMADARALKEIKAKSPLPLIVDIHFNHNLAVYCAEFIDGVRINPGNIGSKENIKEVVKACKERGIPIRIGVNHGSIEKQFSDKFGYGVDAMLESAMYNIKLLEDLDFFDIKISMKTSDAQKTIEAYERLRPLCDYPFHLGVTEAGTKFHSTVKSSIALGNLLLKGIGDTMRVSMTGELEEEIRVARAILQDSGVQKSGVNIISCPTCGRIQSDLLSAIKIVEEKTKHIKEPLNISVMGCVVNALGEAKGADVAIAFGKNQGLVIRHGEVVAKLKESELVDRFLAEVEDEVKSRAVKE.

The [4Fe-4S] cluster site is built by Cys264, Cys267, Cys299, and Glu306.

The protein belongs to the IspG family. [4Fe-4S] cluster is required as a cofactor.

The catalysed reaction is (2E)-4-hydroxy-3-methylbut-2-enyl diphosphate + oxidized [flavodoxin] + H2O + 2 H(+) = 2-C-methyl-D-erythritol 2,4-cyclic diphosphate + reduced [flavodoxin]. Its pathway is isoprenoid biosynthesis; isopentenyl diphosphate biosynthesis via DXP pathway; isopentenyl diphosphate from 1-deoxy-D-xylulose 5-phosphate: step 5/6. Functionally, converts 2C-methyl-D-erythritol 2,4-cyclodiphosphate (ME-2,4cPP) into 1-hydroxy-2-methyl-2-(E)-butenyl 4-diphosphate. In Campylobacter jejuni subsp. jejuni serotype O:6 (strain 81116 / NCTC 11828), this protein is 4-hydroxy-3-methylbut-2-en-1-yl diphosphate synthase (flavodoxin).